The following is a 371-amino-acid chain: MLNEFIAIRRDLHQIPETGYKELKTQAYLLDYISKLPNEFLEIKKWRTGILVLVKGTNPGKTIGYRTDIDALPITEETGLPFESKHAGNMHACGHDLHMSIALGVLTHFASKPAKDNLLFVFQPAEEGPGGAKPIMESAEFSEWRPDTIYGLHIAPEYKVGQIAIKPGLLFANTSELFISFKGKGGHAAYPHLANDMVVAASAFVGQMQTIISRNIDPMDSAVITIGRIHGGEIQNVIAETAFLDGTIRTLSPETMEIVWTRLKQLAKGWEEAYQCEVEFHPGSDYYQVDNDPVETEEFIHFLEEQYPESYVPARSAMTGEDFGYFLSEIKGFMFWLGVDSEYSLHHAKLSPKEEAIPFAIDVLVNFLESK.

The active site involves D68. E127 (proton acceptor) is an active-site residue.

It belongs to the peptidase M20A family. N-acetyldiaminopimelate deacetylase subfamily.

It catalyses the reaction N-acetyl-(2S,6S)-2,6-diaminopimelate + H2O = (2S,6S)-2,6-diaminopimelate + acetate. Its pathway is amino-acid biosynthesis; L-lysine biosynthesis via DAP pathway; LL-2,6-diaminopimelate from (S)-tetrahydrodipicolinate (acetylase route): step 3/3. Functionally, catalyzes the conversion of N-acetyl-diaminopimelate to diaminopimelate and acetate. The protein is N-acetyldiaminopimelate deacetylase of Listeria innocua serovar 6a (strain ATCC BAA-680 / CLIP 11262).